The primary structure comprises 1093 residues: MKEMVGGCCVCSDERGWAENPLVYCDGHACSVAVHQACYGIVQVPTGPWFCRKCESQERAARVRCELCPHKDGALKRTDNGGWAHVVCALYIPEVQFANVLTMEPIVLQYVPHDRFNKTCYICEEQGRESKAASGACMTCNRHGCRQAFHVTCAQMAGLLCEEEVLEVDNVKYCGYCKYHFSKMKTSRHSSGGGGGGAGGGGGSMGGGGSGFISGRRSRSASPSTQQEKHPTHHERGQKKSRKDKERLKQKHKKRPESPPSILTPPVVPTADKVSSSASSSSHHEASTQETSESSRESKGKKSSSHSLSHKGKKLSSGKGVSSFTSASSSSSSSSSSSGGPFQPAVSSLQSSPDFSAFPKLEQPEEDKYSKPTAPAPSAPPSPSAPEPPKADLFEQKVVFSGFGPIMRFSTTTSSSGRARAPSPGDYKSPHVTGSGASAGTHKRMPALSATPVPADETPETGLKEKKHKASKRSRHGPGRPKGSRNKEGTGGPAAPSLPSAQLAGFTATAASPFSGGSLVSSGLGGLSSRTFGPSGSLPSLSLESPLLGAGIYTSNKDPISHSGGMLRAVCSTPLSSSLLGPPGTSALPRLSRSPFTSTLPSSSASISTTQVFSLAGSTFSLPSTHIFGTPMGAVNPLLSQAESSHTEPDLEDCSFRCRGTSPQESLSSMSPISSLPALFDQTASAPCGGGQLDPAAPGTTNMEQLLEKQGDGEAGVNIVEMLKALHALQKENQRLQEQILSLTAKKERLQILNVQLSVPFPALPAALPAANGPVPGPYGLPPQAGSSDSLSTSKSPPGKSSLGLDNSLSTSSEDPHSGCPSRSSSSLSFHSTPPPLPLLQQSPATLPLALPGAPAPLPPQPQNGLGRAPGAAGLGAMPMAEGLLGGLAGSGGLPLNGLLGGLNGAAAPNPASLSQAGGAPTLQLPGCLNSLTEQQRHLLQQQEQQLQQLQQLLASPQLTPEHQTVVYQMIQQIQQKRELQRLQMAGGSQLPMASLLAGSSTPLLSAGTPGLLPTASAPPLLPAGALVAPSLGNNTSLMAAAAAAAAVAAAGGPPVLTAQTNPFLSLSGAEGSGGGPKGGTADKGASANQEKG.

A PHD-type 1 zinc finger spans residues valine 5 to glutamine 57. A C2HC pre-PHD-type zinc finger spans residues arginine 62 to valine 95. The PHD-type 2 zinc finger occupies lysine 118 to phenylalanine 181. The disordered stretch occupies residues lysine 185–serine 500. The span at serine 191 to phenylalanine 212 shows a compositional bias: gly residues. Over residues proline 231 to arginine 255 the composition is skewed to basic residues. Serine 258 is modified (phosphoserine). A compositionally biased stretch (pro residues) spans serine 258–valine 268. Over residues serine 282 to glycine 300 the composition is skewed to basic and acidic residues. Basic residues predominate over residues lysine 301–serine 316. The span at serine 317–glycine 340 shows a compositional bias: low complexity. The span at alanine 345–aspartate 354 shows a compositional bias: polar residues. Pro residues predominate over residues alanine 374–proline 388. Phosphoserine occurs at positions 378 and 423. Over residues serine 410–glycine 425 the composition is skewed to low complexity. Threonine 451 carries the phosphothreonine modification. Residues glutamate 465–serine 484 show a composition bias toward basic residues. Positions leucine 729–leucine 764 are leucine-zipper. 2 disordered regions span residues valine 775–glycine 871 and glutamine 1060–glycine 1093. Low complexity predominate over residues serine 787 to serine 796. The segment covering glycine 804–serine 813 has biased composition (polar residues). 2 stretches are compositionally biased toward low complexity: residues serine 818–serine 832 and leucine 839–glycine 853.

In terms of assembly, interacts with histone H3; interaction is necessary for MLLT6 binding to nucleosomes; interaction is inhibited by histone H3 'Lys-27' methylations (H3K27me1, H3K27me2 and H3K27me3).

The protein resides in the nucleus. This is Protein AF-17 (MLLT6) from Homo sapiens (Human).